A 215-amino-acid polypeptide reads, in one-letter code: Small ribosomal subunit protein uS3c (215 aa).

Residues 43-116 enclose the KH type-2 domain; the sequence is IKNYIKKNMK…KLNMAITRIA (74 aa).

Belongs to the universal ribosomal protein uS3 family. Part of the 30S ribosomal subunit.

Its subcellular location is the plastid. The protein resides in the chloroplast. The protein is Small ribosomal subunit protein uS3c (rps3) of Morus indica (Mulberry).